The primary structure comprises 1479 residues: Type VII secretion system protein EssC (1479 aa).

Over 1–229 (MHKLIIKYNK…RPPQPIQKNN (229 aa)) the chain is Cytoplasmic. Residues 230 to 252 (TVIWRSIIPPLVMIALTVVIFLV) traverse the membrane as a helical segment. Residues 253 to 256 (RPIG) are Extracellular-facing. A helical membrane pass occupies residues 257–279 (IYILMMIGMSTVTIVFGITTYFS). Topologically, residues 280 to 1479 (EKKKYNKDVE…QAYQKIRWFK (1200 aa)) are cytoplasmic. FtsK domains lie at 652 to 846 (DDIL…QDSN) and 997 to 1183 (QGPM…SEVS). ATP contacts are provided by residues 672–679 (GTTGSGKS) and 1014–1021 (GSPGYGRT).

The protein belongs to the EssC family. As to quaternary structure, homooligomer. Interacts with EsaE.

The protein resides in the cell membrane. Component of the type VII secretion system (Ess). Required for the secretion of substrates including EsxA and EsxB. However, unable to support secretion of the substrate protein EsxC. The polypeptide is Type VII secretion system protein EssC (Staphylococcus aureus (strain Mu50 / ATCC 700699)).